The following is a 352-amino-acid chain: C-C chemokine receptor type 5 (352 aa).

Residues 1–30 (MDYQVSSPIYDIDYGPSEPCRKIDVKQMGA) lie on the Extracellular side of the membrane. Y3 bears the Sulfotyrosine mark. O-linked (GalNAc...) serine glycans are attached at residues S6 and S7. A sulfotyrosine mark is found at Y10 and Y14. Intrachain disulfides connect C20–C269 and C101–C178. A helical transmembrane segment spans residues 31 to 58 (QLLPPLYSLVFLFGFVGNMLVVLILINC). The Cytoplasmic segment spans residues 59-68 (KRLKSMTDIY). The chain crosses the membrane as a helical span at residues 69-89 (LLNLAISDLLFLFTIPFWAHY). Residues 90-102 (AAGQWDFGNTMCQ) lie on the Extracellular side of the membrane. The helical transmembrane segment at 103–124 (FLTALYFIGFFSGIFFIILLTI) threads the bilayer. Residues 125–141 (DRYLAIVHAVFALKART) are Cytoplasmic-facing. Residues 142–166 (VTFGVVTSVITWVVAVFASLPGIIF) form a helical membrane-spanning segment. Over 167-198 (TRSQKEGYHYSCSPHFPFSQYRFWKNFETLKM) the chain is Extracellular. The helical transmembrane segment at 199 to 218 (VILGLVLPLLVMVICYSGIL) threads the bilayer. Topologically, residues 219 to 235 (KTLLRCRNEKKRHRAVR) are cytoplasmic. Residues 236–260 (LIFTIMIVYFLFWAPYNIVLLINTY) form a helical membrane-spanning segment. At 261–277 (PDFFGVNNCNSSNRLDQ) the chain is on the extracellular side. The chain crosses the membrane as a helical span at residues 278 to 301 (AMQVTETLGMTHCCVNPIIYAFVG). The Cytoplasmic segment spans residues 302-352 (EKFRNYLVIFFQKHIAKRFCKCCSIFQKEAPERANSVYTRSTGEQEISVGL). Residues C321, C323, and C324 are each lipidated (S-palmitoyl cysteine). Phosphoserine; by BARK1 is present on residues S337, S342, and S349.

This sequence belongs to the G-protein coupled receptor 1 family. In terms of assembly, interacts with PRAF2. Efficient ligand binding to CCL3/MIP-1alpha and CCL4/MIP-1beta requires sulfation, O-glycosylation and sialic acid modifications. Glycosylation on Ser-6 is required for efficient binding of CCL4. Interacts with GRK2. Interacts with ARRB1 and ARRB2. Interacts with CNIH4. Interacts with S100A4; this interaction stimulates T-lymphocyte chemotaxis. Post-translationally, sulfated on at least 2 of the N-terminal tyrosines. Sulfation is required for efficient binding of the chemokines, CCL3 and CCL4. In terms of processing, palmitoylation in the C-terminal is important for cell surface expression. Phosphorylation on serine residues in the C-terminal is stimulated by binding CC chemokines especially by APO-RANTES. Post-translationally, O-glycosylated, but not N-glycosylated. Ser-6 appears to be the major site even if Ser-7 may be also O-glycosylated. Also sialylated glycans present which contribute to chemokine binding. Ser-17 may also be glycosylated and, if so, with small moieties such as a T-antigen.

It localises to the cell membrane. In terms of biological role, receptor for a number of inflammatory CC-chemokines including CCL3/MIP-1-alpha, CCL4/MIP-1-beta and RANTES and subsequently transduces a signal by increasing the intracellular calcium ion level. May play a role in the control of granulocytic lineage proliferation or differentiation. Participates in T-lymphocyte migration to the infection site by acting as a chemotactic receptor. The chain is C-C chemokine receptor type 5 (CCR5) from Saimiri sciureus (Common squirrel monkey).